The chain runs to 231 residues: 5'-methylthioadenosine/S-adenosylhomocysteine nucleosidase (231 aa).

Glutamate 12 functions as the Proton acceptor in the catalytic mechanism. Substrate-binding positions include glycine 78, valine 153, and 174 to 175; that span reads ME. The active-site Proton donor is aspartate 198.

The protein belongs to the PNP/UDP phosphorylase family. MtnN subfamily.

It catalyses the reaction S-adenosyl-L-homocysteine + H2O = S-(5-deoxy-D-ribos-5-yl)-L-homocysteine + adenine. The catalysed reaction is S-methyl-5'-thioadenosine + H2O = 5-(methylsulfanyl)-D-ribose + adenine. It carries out the reaction 5'-deoxyadenosine + H2O = 5-deoxy-D-ribose + adenine. Its pathway is amino-acid biosynthesis; L-methionine biosynthesis via salvage pathway; S-methyl-5-thio-alpha-D-ribose 1-phosphate from S-methyl-5'-thioadenosine (hydrolase route): step 1/2. Catalyzes the irreversible cleavage of the glycosidic bond in both 5'-methylthioadenosine (MTA) and S-adenosylhomocysteine (SAH/AdoHcy) to adenine and the corresponding thioribose, 5'-methylthioribose and S-ribosylhomocysteine, respectively. Also cleaves 5'-deoxyadenosine, a toxic by-product of radical S-adenosylmethionine (SAM) enzymes, into 5-deoxyribose and adenine. This is 5'-methylthioadenosine/S-adenosylhomocysteine nucleosidase from Aliivibrio fischeri (strain MJ11) (Vibrio fischeri).